The sequence spans 135 residues: Histone H2A (135 aa).

Belongs to the histone H2A family. As to quaternary structure, the nucleosome is a histone octamer containing two molecules each of H2A, H2B, H3 and H4 assembled in one H3-H4 heterotetramer and two H2A-H2B heterodimers. The octamer wraps approximately 147 bp of DNA.

Its subcellular location is the nucleus. The protein resides in the chromosome. In terms of biological role, core component of nucleosome. Nucleosomes wrap and compact DNA into chromatin, limiting DNA accessibility to the cellular machineries which require DNA as a template. Histones thereby play a central role in transcription regulation, DNA repair, DNA replication and chromosomal stability. DNA accessibility is regulated via a complex set of post-translational modifications of histones, also called histone code, and nucleosome remodeling. The polypeptide is Histone H2A (Trypanosoma cruzi).